Reading from the N-terminus, the 101-residue chain is Acylphosphatase (101 aa).

Residues 11–99 form the Acylphosphatase-like domain; sequence SWLVKAIGRV…PRLNRFDRLP (89 aa). Active-site residues include Arg26 and Asn44.

It belongs to the acylphosphatase family.

It catalyses the reaction an acyl phosphate + H2O = a carboxylate + phosphate + H(+). The polypeptide is Acylphosphatase (acyP) (Polaromonas naphthalenivorans (strain CJ2)).